The sequence spans 876 residues: Alanine--tRNA ligase (876 aa).

Zn(2+) is bound by residues histidine 565, histidine 569, cysteine 667, and histidine 671.

The protein belongs to the class-II aminoacyl-tRNA synthetase family. Requires Zn(2+) as cofactor.

Its subcellular location is the cytoplasm. The catalysed reaction is tRNA(Ala) + L-alanine + ATP = L-alanyl-tRNA(Ala) + AMP + diphosphate. Catalyzes the attachment of alanine to tRNA(Ala) in a two-step reaction: alanine is first activated by ATP to form Ala-AMP and then transferred to the acceptor end of tRNA(Ala). Also edits incorrectly charged Ser-tRNA(Ala) and Gly-tRNA(Ala) via its editing domain. This is Alanine--tRNA ligase from Staphylococcus saprophyticus subsp. saprophyticus (strain ATCC 15305 / DSM 20229 / NCIMB 8711 / NCTC 7292 / S-41).